A 440-amino-acid polypeptide reads, in one-letter code: Trigger factor (440 aa).

In terms of domain architecture, PPIase FKBP-type spans 163–248 (GDGVTVDFEG…VKKIESAHLP (86 aa)).

The protein belongs to the FKBP-type PPIase family. Tig subfamily.

The protein localises to the cytoplasm. The enzyme catalyses [protein]-peptidylproline (omega=180) = [protein]-peptidylproline (omega=0). Its function is as follows. Involved in protein export. Acts as a chaperone by maintaining the newly synthesized protein in an open conformation. Functions as a peptidyl-prolyl cis-trans isomerase. The chain is Trigger factor from Verminephrobacter eiseniae (strain EF01-2).